Here is a 108-residue protein sequence, read N- to C-terminus: Peptidyl-prolyl cis-trans isomerase FKBP1B (108 aa).

Residues 20–108 form the PPIase FKBP-type domain; the sequence is GQICVVHYTG…IFDVELLSLE (89 aa).

The protein belongs to the FKBP-type PPIase family. FKBP1 subfamily. Identified in a complex composed of RYR2, FKBP1B, PKA catalytic subunit, PRKAR2A, AKAP6, and the protein phosphatases PP2A and PP1. Interacts directly with RYR2.

The protein resides in the cytoplasm. It is found in the sarcoplasmic reticulum. The enzyme catalyses [protein]-peptidylproline (omega=180) = [protein]-peptidylproline (omega=0). Its activity is regulated as follows. Inhibited by both FK506 and rapamycin. Has the potential to contribute to the immunosuppressive and toxic effects of FK506 and rapamycin. PPIases accelerate the folding of proteins. It catalyzes the cis-trans isomerization of proline imidic peptide bonds in oligopeptides. This is Peptidyl-prolyl cis-trans isomerase FKBP1B (Fkbp1b) from Mus musculus (Mouse).